Here is a 579-residue protein sequence, read N- to C-terminus: Pentatricopeptide repeat-containing protein At2g15690, mitochondrial (579 aa).

A mitochondrion-targeting transit peptide spans 1–49 (MSSLMAIRCARTQNIVTIGSLLQLRSSFPRLSSQFHFSGTLNSIPIKHL). Composition is skewed to polar residues over residues 56-71 (NDYHQNPQSGSPSQHQ) and 78-103 (SFDSQNQTNTNQRVPQSPNQWSTQHG). The disordered stretch occupies residues 56–208 (NDYHQNPQSG…QMNEVAPPPS (153 aa)). Low complexity-rich tracts occupy residues 117 to 136 (GGQRPPYGGQNPQQGGQMSQ) and 148 to 199 (RPQY…SPNQ). PPR repeat units follow at residues 235-269 (DRECFVLLFESCANLKSLEHSKKVHDHFLQSKFRG), 270-300 (DPKLNNMVISMFGECSSITDAKRVFDHMVDK), 301-335 (DMDSWHLMMCAYSDNGMGDDALHLFEEMTKHGLKP), 336-371 (NEETFLTVFLACATVGGIEEAFLHFDSMKNEHGISP), and 372-402 (KTEHYLGVLGVLGKCGHLVEAEQYIRDLPFE). Positions 485-579 (GVVYVPDTRF…DGKCSCGDYW (95 aa)) are type DYW motif.

The protein belongs to the PPR family. PCMP-H subfamily.

Its subcellular location is the mitochondrion. In Arabidopsis thaliana (Mouse-ear cress), this protein is Pentatricopeptide repeat-containing protein At2g15690, mitochondrial (PCMP-H66).